Consider the following 263-residue polypeptide: Acyl-[acyl-carrier-protein]--UDP-N-acetylglucosamine O-acyltransferase (263 aa).

The protein belongs to the transferase hexapeptide repeat family. LpxA subfamily. As to quaternary structure, homotrimer.

It is found in the cytoplasm. It catalyses the reaction a (3R)-hydroxyacyl-[ACP] + UDP-N-acetyl-alpha-D-glucosamine = a UDP-3-O-[(3R)-3-hydroxyacyl]-N-acetyl-alpha-D-glucosamine + holo-[ACP]. Its pathway is glycolipid biosynthesis; lipid IV(A) biosynthesis; lipid IV(A) from (3R)-3-hydroxytetradecanoyl-[acyl-carrier-protein] and UDP-N-acetyl-alpha-D-glucosamine: step 1/6. Its function is as follows. Involved in the biosynthesis of lipid A, a phosphorylated glycolipid that anchors the lipopolysaccharide to the outer membrane of the cell. This is Acyl-[acyl-carrier-protein]--UDP-N-acetylglucosamine O-acyltransferase from Xanthomonas axonopodis pv. citri (strain 306).